The primary structure comprises 482 residues: ATP synthase subunit beta (482 aa).

Residue 162–169 (GGAGVGKT) participates in ATP binding.

It belongs to the ATPase alpha/beta chains family. F-type ATPases have 2 components, CF(1) - the catalytic core - and CF(0) - the membrane proton channel. CF(1) has five subunits: alpha(3), beta(3), gamma(1), delta(1), epsilon(1). CF(0) has four main subunits: a(1), b(1), b'(1) and c(9-12).

The protein resides in the cellular thylakoid membrane. It catalyses the reaction ATP + H2O + 4 H(+)(in) = ADP + phosphate + 5 H(+)(out). Produces ATP from ADP in the presence of a proton gradient across the membrane. The catalytic sites are hosted primarily by the beta subunits. The chain is ATP synthase subunit beta from Nostoc punctiforme (strain ATCC 29133 / PCC 73102).